The primary structure comprises 372 residues: tRNA-specific 2-thiouridylase MnmA (372 aa).

ATP is bound by residues 11 to 18 (GMSGGVDS) and M37. The tract at residues 97–99 (NPD) is interaction with target base in tRNA. C102 functions as the Nucleophile in the catalytic mechanism. The cysteines at positions 102 and 199 are disulfide-linked. ATP is bound at residue G126. An interaction with tRNA region spans residues 149-151 (KDQ). Residue C199 is the Cysteine persulfide intermediate of the active site. Residues 309 to 310 (RY) are interaction with tRNA.

The protein belongs to the MnmA/TRMU family.

It is found in the cytoplasm. It catalyses the reaction S-sulfanyl-L-cysteinyl-[protein] + uridine(34) in tRNA + AH2 + ATP = 2-thiouridine(34) in tRNA + L-cysteinyl-[protein] + A + AMP + diphosphate + H(+). Functionally, catalyzes the 2-thiolation of uridine at the wobble position (U34) of tRNA, leading to the formation of s(2)U34. This is tRNA-specific 2-thiouridylase MnmA from Staphylococcus aureus (strain MSSA476).